The sequence spans 354 residues: Nicotinate-nucleotide--dimethylbenzimidazole phosphoribosyltransferase (354 aa).

Catalysis depends on glutamate 322, which acts as the Proton acceptor.

Belongs to the CobT family.

The catalysed reaction is 5,6-dimethylbenzimidazole + nicotinate beta-D-ribonucleotide = alpha-ribazole 5'-phosphate + nicotinate + H(+). Its pathway is nucleoside biosynthesis; alpha-ribazole biosynthesis; alpha-ribazole from 5,6-dimethylbenzimidazole: step 1/2. Its function is as follows. Catalyzes the synthesis of alpha-ribazole-5'-phosphate from nicotinate mononucleotide (NAMN) and 5,6-dimethylbenzimidazole (DMB). The protein is Nicotinate-nucleotide--dimethylbenzimidazole phosphoribosyltransferase of Solidesulfovibrio magneticus (strain ATCC 700980 / DSM 13731 / RS-1) (Desulfovibrio magneticus).